A 99-amino-acid polypeptide reads, in one-letter code: UPF0213 protein YazA (99 aa).

One can recognise a GIY-YIG domain in the interval 4-79; the sequence is NNHFFYVVKC…KKLTRKKKEL (76 aa).

It belongs to the UPF0213 family.

In Bacillus subtilis (strain 168), this protein is UPF0213 protein YazA (yazA).